We begin with the raw amino-acid sequence, 533 residues long: Probable protein kinase UbiB (533 aa).

The chain crosses the membrane as a helical span at residues leucine 24–tryptophan 44. In terms of domain architecture, Protein kinase spans arginine 126–glycine 494. ATP-binding positions include leucine 132–valine 140 and lysine 154. Residue aspartate 289 is the Proton acceptor of the active site. A helical transmembrane segment spans residues leucine 510 to isoleucine 530.

Belongs to the ABC1 family. UbiB subfamily.

It localises to the cell inner membrane. It participates in cofactor biosynthesis; ubiquinone biosynthesis [regulation]. Functionally, is probably a protein kinase regulator of UbiI activity which is involved in aerobic coenzyme Q (ubiquinone) biosynthesis. The polypeptide is Probable protein kinase UbiB (Pseudomonas paraeruginosa (strain DSM 24068 / PA7) (Pseudomonas aeruginosa (strain PA7))).